A 522-amino-acid chain; its full sequence is Sugar transport protein 1 (522 aa).

At 1–22 (MPAGGFVVGDGQKAYPGKLTPF) the chain is on the cytoplasmic side. Residues 23 to 43 (VLFTCVVAAMGGLIFGYDIGI) traverse the membrane as a helical segment. The Extracellular segment spans residues 44-79 (SGGVTSMPSFLKRFFPSVYRKQQEDASTNQYCQYDS). Residues 80-100 (PTLTMFTSSLYLAALISSLVA) form a helical membrane-spanning segment. At 101–117 (STVTRKFGRRLSMLFGG) the chain is on the cytoplasmic side. The chain crosses the membrane as a helical span at residues 118 to 138 (ILFCAGALINGFAKHVWMLIV). Over 139–140 (GR) the chain is Extracellular. A helical transmembrane segment spans residues 141 to 161 (ILLGFGIGFANQAVPLYLSEM). Residues 162–171 (APYKYRGALN) are Cytoplasmic-facing. A helical membrane pass occupies residues 172–192 (IGFQLSITIGILVAEVLNYFF). At 193–202 (AKIKGGWGWR) the chain is on the extracellular side. A helical membrane pass occupies residues 203–223 (LSLGGAVVPALIITIGSLVLP). The Cytoplasmic portion of the chain corresponds to 224–289 (DTPNSMIERG…YRPHLTMAVM (66 aa)). S252 is modified (phosphoserine). Residues 290 to 310 (IPFFQQLTGINVIMFYAPVLF) traverse the membrane as a helical segment. Topologically, residues 311–321 (NTIGFTTDASL) are extracellular. Residues 322–342 (MSAVVTGSVNVAATLVSIYGV) form a helical membrane-spanning segment. Residues 343 to 348 (DRWGRR) lie on the Cytoplasmic side of the membrane. Residues 349–369 (FLFLEGGTQMLICQAVVAACI) form a helical membrane-spanning segment. At 370-384 (GAKFGVDGTPGELPK) the chain is on the extracellular side. The chain crosses the membrane as a helical span at residues 385–405 (WYAIVVVTFICIYVAGFAWSW). The Cytoplasmic segment spans residues 406 to 427 (GPLGWLVPSEIFPLEIRSAAQS). Residues 428 to 448 (ITVSVNMIFTFIIAQIFLTML) form a helical membrane-spanning segment. Residues 449-452 (CHLK) are Extracellular-facing. The helical transmembrane segment at 453–473 (FGLFLVFAFFVVVMSIFVYIF) threads the bilayer. At 474 to 522 (LPETKGIPIEEMGQVWRSHWYWSRFVEDGEYGNALEMGKNSNQAGTKHV) the chain is on the cytoplasmic side.

Belongs to the major facilitator superfamily. Sugar transporter (TC 2.A.1.1) family. As to expression, mostly expressed in young leaves, especially in guard cells (at protein level). Also present in roots.

Its subcellular location is the cell membrane. In terms of biological role, major hexose transporter. Mediates an active uptake of hexoses, by sugar/hydrogen symport. Can transport glucose, 3-O-methylglucose, fructose, xylose, mannose, galactose, fucose, 2-deoxyglucose and arabinose. Confers sensitivity to galactose in seedlings. This is Sugar transport protein 1 (STP1) from Arabidopsis thaliana (Mouse-ear cress).